Reading from the N-terminus, the 277-residue chain is Digeranylgeranylglyceryl phosphate synthase (277 aa).

The next 7 helical transmembrane spans lie at 16 to 36, 40 to 60, 101 to 121, 129 to 149, 153 to 173, 205 to 225, and 257 to 277; these read ILAG…IPSI, GLVF…NDYF, FLGV…FIYA, FIGN…GALG, VGLA…REIM, IFGV…IGLG, and LKIA…TKGV.

This sequence belongs to the UbiA prenyltransferase family. DGGGP synthase subfamily. Requires Mg(2+) as cofactor.

The protein resides in the cell membrane. The enzyme catalyses sn-3-O-(geranylgeranyl)glycerol 1-phosphate + (2E,6E,10E)-geranylgeranyl diphosphate = 2,3-bis-O-(geranylgeranyl)-sn-glycerol 1-phosphate + diphosphate. The protein operates within membrane lipid metabolism; glycerophospholipid metabolism. Functionally, prenyltransferase that catalyzes the transfer of the geranylgeranyl moiety of geranylgeranyl diphosphate (GGPP) to the C2 hydroxyl of (S)-3-O-geranylgeranylglyceryl phosphate (GGGP). This reaction is the second ether-bond-formation step in the biosynthesis of archaeal membrane lipids. This Pyrococcus abyssi (strain GE5 / Orsay) protein is Digeranylgeranylglyceryl phosphate synthase.